The sequence spans 514 residues: tRNA-2-methylthio-N(6)-dimethylallyladenosine synthase (514 aa).

The MTTase N-terminal domain occupies 68–186 (RTFLIKTYGC…LPEILEEAYL (119 aa)). 6 residues coordinate [4Fe-4S] cluster: Cys-77, Cys-113, Cys-147, Cys-223, Cys-227, and Cys-230. One can recognise a Radical SAM core domain in the interval 209 to 439 (REGSTKAWVN…NKKVGHYSEK (231 aa)). The 64-residue stretch at 442-505 (NQYEGKTVTV…QYSLNGTFKE (64 aa)) folds into the TRAM domain.

The protein belongs to the methylthiotransferase family. MiaB subfamily. Monomer. The cofactor is [4Fe-4S] cluster.

The protein localises to the cytoplasm. The catalysed reaction is N(6)-dimethylallyladenosine(37) in tRNA + (sulfur carrier)-SH + AH2 + 2 S-adenosyl-L-methionine = 2-methylsulfanyl-N(6)-dimethylallyladenosine(37) in tRNA + (sulfur carrier)-H + 5'-deoxyadenosine + L-methionine + A + S-adenosyl-L-homocysteine + 2 H(+). Catalyzes the methylthiolation of N6-(dimethylallyl)adenosine (i(6)A), leading to the formation of 2-methylthio-N6-(dimethylallyl)adenosine (ms(2)i(6)A) at position 37 in tRNAs that read codons beginning with uridine. The polypeptide is tRNA-2-methylthio-N(6)-dimethylallyladenosine synthase (Staphylococcus haemolyticus (strain JCSC1435)).